Consider the following 314-residue polypeptide: tRNA pseudouridine synthase B (314 aa).

Residue Asp-41 is the Nucleophile of the active site.

This sequence belongs to the pseudouridine synthase TruB family. Type 1 subfamily.

It carries out the reaction uridine(55) in tRNA = pseudouridine(55) in tRNA. In terms of biological role, responsible for synthesis of pseudouridine from uracil-55 in the psi GC loop of transfer RNAs. The protein is tRNA pseudouridine synthase B of Prochlorococcus marinus (strain NATL1A).